The following is a 101-amino-acid chain: Acylphosphatase (101 aa).

Residues 12 to 98 (RAHVFVTGRV…EGLRGFEVKR (87 aa)) form the Acylphosphatase-like domain. Catalysis depends on residues Arg-27 and Asn-45.

The protein belongs to the acylphosphatase family.

The enzyme catalyses an acyl phosphate + H2O = a carboxylate + phosphate + H(+). This is Acylphosphatase (acyP) from Nostoc sp. (strain PCC 7120 / SAG 25.82 / UTEX 2576).